A 303-amino-acid chain; its full sequence is Putative S-adenosyl-L-methionine-dependent methyltransferase Mb1931c (303 aa).

S-adenosyl-L-methionine-binding positions include Asp129 and 158–159 (DL).

It belongs to the UPF0677 family.

Its function is as follows. Exhibits S-adenosyl-L-methionine-dependent methyltransferase activity. In Mycobacterium bovis (strain ATCC BAA-935 / AF2122/97), this protein is Putative S-adenosyl-L-methionine-dependent methyltransferase Mb1931c.